Consider the following 641-residue polypeptide: Single-strand DNA endonuclease 1 (641 aa).

The tract at residues 1 to 90 is N-domain; that stretch reads MGVKNLWDIL…SLKLATYRRR (90 aa). Residues 2–97 form an XPG-N domain region; the sequence is GVKNLWDILE…RRRLGSISHA (96 aa). Residues aspartate 30, aspartate 76, glutamate 144, glutamate 146, aspartate 165, aspartate 167, and aspartate 217 each coordinate Mg(2+). The XPG-I domain stretch occupies residues 132–217; it reads MALGIPCLDG…ISLAVLLGSD (86 aa). I-domain stretches follow at residues 132–220 and 132–221; these read MALG…DYSN and MALG…YSNG. The 5'-3' exonuclease domain stretch occupies residues 217 to 350; it reads DYSNGVNGFG…ILPKIAEREL (134 aa). Disordered regions lie at residues 428-448 and 572-615; these read KGEE…QAAV and VGSH…RVHH. The segment covering 580-590 has biased composition (gly residues); the sequence is DGGGGGGGGVA.

The protein belongs to the XPG/RAD2 endonuclease family. GEN subfamily. The cofactor is Mg(2+). In terms of tissue distribution, highly expressed in shoot apical meristem (SAM) and young leaves. Expressed in roots, flag leaf and panicles.

The protein localises to the nucleus. Functionally, single-stranded DNA endonuclease activity in vitro. May not be active as double-stranded DNA endonuclease. Endonuclease which cleaves flap structures at the junction between single-stranded DNA and double-stranded DNA with a specific cleavage site in the 5' overhang strand exactly one nucleotide 3' of the branch point. Structure- and sequence-specific nuclease that resolves holliday junctions (HJs) by symmetrically oriented incisions in two opposing strands near the junction point, thus leading to ligatable products; HJs are physical links between homologous DNA molecules that arise as central intermediary structures during homologous recombination and repair in meiotic and somatic cells. Probably involved in the resolution of toxic replication structures to ensure genome stability, and to maintain telomere integrity and replication. This chain is Single-strand DNA endonuclease 1, found in Oryza sativa subsp. japonica (Rice).